The following is a 609-amino-acid chain: Dihydroxy-acid dehydratase (609 aa).

Residue Asp82 participates in Mg(2+) binding. Cys123 provides a ligand contact to [2Fe-2S] cluster. Positions 124 and 125 each coordinate Mg(2+). N6-carboxylysine is present on Lys125. Residue Cys192 participates in [2Fe-2S] cluster binding. Position 489 (Glu489) interacts with Mg(2+). Catalysis depends on Ser515, which acts as the Proton acceptor.

This sequence belongs to the IlvD/Edd family. As to quaternary structure, homodimer. [2Fe-2S] cluster serves as cofactor. It depends on Mg(2+) as a cofactor.

It catalyses the reaction (2R)-2,3-dihydroxy-3-methylbutanoate = 3-methyl-2-oxobutanoate + H2O. It carries out the reaction (2R,3R)-2,3-dihydroxy-3-methylpentanoate = (S)-3-methyl-2-oxopentanoate + H2O. The protein operates within amino-acid biosynthesis; L-isoleucine biosynthesis; L-isoleucine from 2-oxobutanoate: step 3/4. It participates in amino-acid biosynthesis; L-valine biosynthesis; L-valine from pyruvate: step 3/4. Its function is as follows. Functions in the biosynthesis of branched-chain amino acids. Catalyzes the dehydration of (2R,3R)-2,3-dihydroxy-3-methylpentanoate (2,3-dihydroxy-3-methylvalerate) into 2-oxo-3-methylpentanoate (2-oxo-3-methylvalerate) and of (2R)-2,3-dihydroxy-3-methylbutanoate (2,3-dihydroxyisovalerate) into 2-oxo-3-methylbutanoate (2-oxoisovalerate), the penultimate precursor to L-isoleucine and L-valine, respectively. The polypeptide is Dihydroxy-acid dehydratase (Azobacteroides pseudotrichonymphae genomovar. CFP2).